A 284-amino-acid chain; its full sequence is L-ribulose-5-phosphate 3-epimerase UlaE (284 aa).

This sequence belongs to the L-ribulose-5-phosphate 3-epimerase family.

It carries out the reaction L-ribulose 5-phosphate = L-xylulose 5-phosphate. It participates in cofactor degradation; L-ascorbate degradation; D-xylulose 5-phosphate from L-ascorbate: step 3/4. Catalyzes the isomerization of L-xylulose-5-phosphate to L-ribulose-5-phosphate. Is involved in the anaerobic L-ascorbate utilization. The protein is L-ribulose-5-phosphate 3-epimerase UlaE of Salmonella choleraesuis (strain SC-B67).